A 145-amino-acid polypeptide reads, in one-letter code: D-aminoacyl-tRNA deacylase (145 aa).

The Gly-cisPro motif, important for rejection of L-amino acids motif lies at G137–P138.

The protein belongs to the DTD family. Homodimer.

It is found in the cytoplasm. The enzyme catalyses glycyl-tRNA(Ala) + H2O = tRNA(Ala) + glycine + H(+). It carries out the reaction a D-aminoacyl-tRNA + H2O = a tRNA + a D-alpha-amino acid + H(+). An aminoacyl-tRNA editing enzyme that deacylates mischarged D-aminoacyl-tRNAs. Also deacylates mischarged glycyl-tRNA(Ala), protecting cells against glycine mischarging by AlaRS. Acts via tRNA-based rather than protein-based catalysis; rejects L-amino acids rather than detecting D-amino acids in the active site. By recycling D-aminoacyl-tRNA to D-amino acids and free tRNA molecules, this enzyme counteracts the toxicity associated with the formation of D-aminoacyl-tRNA entities in vivo and helps enforce protein L-homochirality. In Exiguobacterium sibiricum (strain DSM 17290 / CCUG 55495 / CIP 109462 / JCM 13490 / 255-15), this protein is D-aminoacyl-tRNA deacylase.